A 711-amino-acid polypeptide reads, in one-letter code: DNA ligase (711 aa).

Residues 39 to 43 (DAEYD), 88 to 89 (SL), and Glu119 each bind NAD(+). The active-site N6-AMP-lysine intermediate is Lys121. 4 residues coordinate NAD(+): Arg142, Glu179, Lys295, and Lys319. Zn(2+) contacts are provided by Cys416, Cys419, Cys434, and Cys440. In terms of domain architecture, BRCT spans 630 to 711 (ESVSSLAGRA…LRELLAGAGA (82 aa)).

This sequence belongs to the NAD-dependent DNA ligase family. LigA subfamily. Mg(2+) is required as a cofactor. Mn(2+) serves as cofactor.

The catalysed reaction is NAD(+) + (deoxyribonucleotide)n-3'-hydroxyl + 5'-phospho-(deoxyribonucleotide)m = (deoxyribonucleotide)n+m + AMP + beta-nicotinamide D-nucleotide.. Its function is as follows. DNA ligase that catalyzes the formation of phosphodiester linkages between 5'-phosphoryl and 3'-hydroxyl groups in double-stranded DNA using NAD as a coenzyme and as the energy source for the reaction. It is essential for DNA replication and repair of damaged DNA. The polypeptide is DNA ligase (Halorhodospira halophila (strain DSM 244 / SL1) (Ectothiorhodospira halophila (strain DSM 244 / SL1))).